The following is a 385-amino-acid chain: UDP-N-acetylglucosamine--N-acetylmuramyl-(pentapeptide) pyrophosphoryl-undecaprenol N-acetylglucosamine transferase (385 aa).

Residues 11-13 (TGG), Asn117, Arg160, Ser215, and Gln317 contribute to the UDP-N-acetyl-alpha-D-glucosamine site.

This sequence belongs to the glycosyltransferase 28 family. MurG subfamily.

The protein resides in the cell inner membrane. It carries out the reaction di-trans,octa-cis-undecaprenyl diphospho-N-acetyl-alpha-D-muramoyl-L-alanyl-D-glutamyl-meso-2,6-diaminopimeloyl-D-alanyl-D-alanine + UDP-N-acetyl-alpha-D-glucosamine = di-trans,octa-cis-undecaprenyl diphospho-[N-acetyl-alpha-D-glucosaminyl-(1-&gt;4)]-N-acetyl-alpha-D-muramoyl-L-alanyl-D-glutamyl-meso-2,6-diaminopimeloyl-D-alanyl-D-alanine + UDP + H(+). It functions in the pathway cell wall biogenesis; peptidoglycan biosynthesis. In terms of biological role, cell wall formation. Catalyzes the transfer of a GlcNAc subunit on undecaprenyl-pyrophosphoryl-MurNAc-pentapeptide (lipid intermediate I) to form undecaprenyl-pyrophosphoryl-MurNAc-(pentapeptide)GlcNAc (lipid intermediate II). The chain is UDP-N-acetylglucosamine--N-acetylmuramyl-(pentapeptide) pyrophosphoryl-undecaprenol N-acetylglucosamine transferase from Rickettsia prowazekii (strain Madrid E).